The following is a 339-amino-acid chain: DNA-directed RNA polymerase subunit alpha (339 aa).

The interval 1–235 is alpha N-terminal domain (alpha-NTD); sequence MTIQKNWQEL…DQLNVFVNFE (235 aa). The tract at residues 251 to 339 is alpha C-terminal domain (alpha-CTD); it reads FNPAFLKKVD…ELAKRFEDHY (89 aa).

It belongs to the RNA polymerase alpha chain family. As to quaternary structure, homodimer. The RNAP catalytic core consists of 2 alpha, 1 beta, 1 beta' and 1 omega subunit. When a sigma factor is associated with the core the holoenzyme is formed, which can initiate transcription.

The catalysed reaction is RNA(n) + a ribonucleoside 5'-triphosphate = RNA(n+1) + diphosphate. DNA-dependent RNA polymerase catalyzes the transcription of DNA into RNA using the four ribonucleoside triphosphates as substrates. This chain is DNA-directed RNA polymerase subunit alpha, found in Rhodopseudomonas palustris (strain ATCC BAA-98 / CGA009).